We begin with the raw amino-acid sequence, 521 residues long: MIGLVVSSADTASVTISDQLHELVEWESHRDAAGDEYEQYDDFEMRTIDEWHLEAENASELFSTTPQIIAFLSRHSGDTGPLLTTHFTGNFGPAEYGGEPGSFAQACPMIQQTLLEAFDRYAPSKYDVGIECTHHGPTTVGAPSLFVELGSSKAEWNDPDGAHAVAQAILELSGEDAPANVETDRTVVGFGGGHYAPRFERIIRETDWVVGHIGADWALDSMGAPAANRDIINHAVTASDADVALVADDRPELTKVISQADIRVVQERWLRETTGVSRPMVSALENALVPIASGLRLGTPATEYDPATSDEFVITDRHTDNDAVGTVHTKDSTDIDTGTNHNVDAERTESEDSHNIRDAIDRADADAVVLAFPTSLMETISGIDIETTNQVFSEHTLAFETTEGGTRPTGRMIVSDYLSVESITHALIDILKLKYDRVERTDETLRVRRQVFDPAKAATLDVPEGPAFGRLAAGESVTVAGRTIDPEAVHTTETVTFPVFSTSSSSSSSSSSSSSSSSSSS.

Disordered regions lie at residues 323-353 and 499-521; these read AVGT…SEDS and VFST…SSSS. Over residues 343-353 the composition is skewed to basic and acidic residues; that stretch reads VDAERTESEDS. Residues 501–521 are compositionally biased toward low complexity; it reads STSSSSSSSSSSSSSSSSSSS.

This sequence belongs to the DtdA deacylase family. As to quaternary structure, monomer. Zn(2+) is required as a cofactor.

The enzyme catalyses a D-aminoacyl-tRNA + H2O = a tRNA + a D-alpha-amino acid + H(+). The catalysed reaction is glycyl-tRNA(Ala) + H2O = tRNA(Ala) + glycine + H(+). Functionally, D-aminoacyl-tRNA deacylase with broad substrate specificity. By recycling D-aminoacyl-tRNA to D-amino acids and free tRNA molecules, this enzyme counteracts the toxicity associated with the formation of D-aminoacyl-tRNA entities in vivo. The chain is D-aminoacyl-tRNA deacylase from Haloquadratum walsbyi (strain DSM 16790 / HBSQ001).